Reading from the N-terminus, the 554-residue chain is Hydroxylamine reductase (554 aa).

[2Fe-2S] cluster-binding residues include Cys-3, Cys-6, Cys-18, and Cys-25. The hybrid [4Fe-2O-2S] cluster site is built by His-252, Glu-276, Cys-320, Cys-408, Cys-436, Cys-461, Glu-495, and Lys-497. Cys-408 is subject to Cysteine persulfide.

This sequence belongs to the HCP family. It depends on [2Fe-2S] cluster as a cofactor. The cofactor is hybrid [4Fe-2O-2S] cluster.

The protein localises to the cytoplasm. The enzyme catalyses A + NH4(+) + H2O = hydroxylamine + AH2 + H(+). Catalyzes the reduction of hydroxylamine to form NH(3) and H(2)O. The polypeptide is Hydroxylamine reductase (Shewanella baltica (strain OS185)).